Here is a 241-residue protein sequence, read N- to C-terminus: Triosephosphate isomerase (241 aa).

9–11 (NWK) provides a ligand contact to substrate. His-96 acts as the Electrophile in catalysis. Glu-165 functions as the Proton acceptor in the catalytic mechanism. Substrate is bound by residues Gly-171, Ser-204, and 225–226 (GG).

It belongs to the triosephosphate isomerase family. As to quaternary structure, homodimer.

Its subcellular location is the cytoplasm. The enzyme catalyses D-glyceraldehyde 3-phosphate = dihydroxyacetone phosphate. The protein operates within carbohydrate biosynthesis; gluconeogenesis. It functions in the pathway carbohydrate degradation; glycolysis; D-glyceraldehyde 3-phosphate from glycerone phosphate: step 1/1. Involved in the gluconeogenesis. Catalyzes stereospecifically the conversion of dihydroxyacetone phosphate (DHAP) to D-glyceraldehyde-3-phosphate (G3P). This is Triosephosphate isomerase from Prochlorococcus marinus (strain MIT 9301).